The sequence spans 310 residues: MFQHTTVLLKEAVDGLNIRPDGIYVDCTLGSGGHSEYLLSRLSEHGKLFAFDQDEAAIMHARERLARYGRQVQFVHRNFRFLQEELSALGVKSVDGVLFDLGVSSPQLDEPERGFSYQHDAPLDMRMNRKQRLTAAEIVNCWPYEELVRIFFRYGEERFSKQVARKIEEVRRTRPIKTTGELVDVIKAAIPAPARRSGGHPAKRIFQALRIAVNDELEAFREALEQAIELLAPGGRVSVITFHSLEDRICKETFKKASESPPLPPGLPVLPDDYRPVLKIITKKPIVPSEEELERNHRARSAKLRIAEKL.

Residues 32 to 34 (GGH), D52, F79, D100, and Q107 each bind S-adenosyl-L-methionine.

This sequence belongs to the methyltransferase superfamily. RsmH family.

The protein localises to the cytoplasm. The catalysed reaction is cytidine(1402) in 16S rRNA + S-adenosyl-L-methionine = N(4)-methylcytidine(1402) in 16S rRNA + S-adenosyl-L-homocysteine + H(+). Functionally, specifically methylates the N4 position of cytidine in position 1402 (C1402) of 16S rRNA. This chain is Ribosomal RNA small subunit methyltransferase H, found in Geobacillus kaustophilus (strain HTA426).